The primary structure comprises 263 residues: Putative ankyrin repeat domain-containing protein 20A12 pseudogene (263 aa).

2 coiled-coil regions span residues 65–121 and 171–263; these read KKDL…MLES and NQVF…IQLH.

The chain is Putative ankyrin repeat domain-containing protein 20A12 pseudogene from Homo sapiens (Human).